The following is a 271-amino-acid chain: Non-homologous end joining protein Ku (271 aa).

A Ku domain is found at 12–194 (KLSLVTCPVV…DQKPVPELLS (183 aa)). Residues 225 to 249 (EAKKTPPAKKTKAEEKTGKGSAESN) form a disordered region.

The protein belongs to the prokaryotic Ku family. As to quaternary structure, homodimer. Interacts with LigD.

Functionally, with LigD forms a non-homologous end joining (NHEJ) DNA repair enzyme, which repairs dsDNA breaks with reduced fidelity. Binds linear dsDNA with 5'- and 3'- overhangs but not closed circular dsDNA nor ssDNA. Recruits and stimulates the ligase activity of LigD. The chain is Non-homologous end joining protein Ku from Methylocella silvestris (strain DSM 15510 / CIP 108128 / LMG 27833 / NCIMB 13906 / BL2).